A 168-amino-acid chain; its full sequence is Photosystem I assembly protein Ycf3 (168 aa).

TPR repeat units lie at residues 35–68, 72–105, and 120–153; these read AFTY…EIDP, SYIL…NPFL, and GEQA…TPGN.

This sequence belongs to the Ycf3 family.

The protein resides in the plastid. The protein localises to the chloroplast thylakoid membrane. Essential for the assembly of the photosystem I (PSI) complex. May act as a chaperone-like factor to guide the assembly of the PSI subunits. The protein is Photosystem I assembly protein Ycf3 of Liriodendron tulipifera (Tuliptree).